Here is a 532-residue protein sequence, read N- to C-terminus: MASGPHPTSTAAAAAAAAASASSAAPSAGGSSSGTTTTTTTTTGGILIGDRLYSEVSLTIDHSLIPEERLSPTPSMQDGLDLPSETDLRILGCELIQAAGILLRLPQVAMATGQVLFHRFFYSKSFVKHSFEIVAMACINLASKIEEAPRRIRDVINVFHHLRQLRGKRTPSPLILDQNYINTKNQVIKAERRVLKELGFCVHVKHPHKIIVMYLQVLECERNQTLVQTAWNYMNDSLRTNVFVRFQPETIACACIYLAARALQIPLPTRPHWFLLFGTTEEEIQEICIETLRLYTRKKPNYELLEKEVEKRKVALQEAKLKAKGLNLDGTPALSTLGGFSPASKPSSPREVKAEEKSPVSINVKTVKKEPEDRQQASKSPYNGVRKDSKRSRTSRSASRSRSRTRSRSRSHSPRRHYNNRRSRSGTYSSRSRSRSRSHSESPRRHHNHGSPHLKAKHTREDLKSSNRHGHKRKKSRSRSQSKTRDHSDVTKKHRHERGHHRDRRERSRSFERSHKGKHHGGSRSGHGRHRR.

Cyclin-like regions lie at residues 94 to 196 (ELIQ…RVLK) and 209 to 293 (KIIV…ETLR). Phosphothreonine is present on Thr331. Positions 332-532 (PALSTLGGFS…SRSGHGRHRR (201 aa)) are disordered. Ser341 and Ser344 each carry phosphoserine. Glycyl lysine isopeptide (Lys-Gly) (interchain with G-Cter in SUMO2) cross-links involve residues Lys345 and Lys353. Residues 348-358 (SPREVKAEEKS) are compositionally biased toward basic and acidic residues. Phosphoserine occurs at positions 358 and 361. Over residues 367-376 (VKKEPEDRQQ) the composition is skewed to basic and acidic residues. Lys368 participates in a covalent cross-link: Glycyl lysine isopeptide (Lys-Gly) (interchain with G-Cter in SUMO2). Residue Ser380 is modified to Phosphoserine. Composition is skewed to basic residues over residues 388 to 424 (DSKR…RRSR), 444 to 458 (RRHH…KAKH), 466 to 482 (SNRH…RSQS), and 492 to 504 (KKHR…HRDR). Residues 396-438 (RSASRSRSRTRSRSRSHSPRRHYNNRRSRSGTYSSRSRSRSRS) form an RS region. Ser451 carries the phosphoserine modification. The span at 505–514 (RERSRSFERS) shows a compositional bias: basic and acidic residues. Residues 515–532 (HKGKHHGGSRSGHGRHRR) show a composition bias toward basic residues.

The protein belongs to the cyclin family. Cyclin L subfamily. Interacts with POLR2A via its hyperphosphorylated C-terminal domain (CTD). Interacts with CDK11A, CDK11B, CDK12 and CDK13. May form a ternary complex with CDK11B and casein kinase II (CKII). Interacts with pre-mRNA-splicing factors, including at least SRSF1, SRSF2 and SRSF7/SLU7. In terms of tissue distribution, widely expressed (at protein level).

Its subcellular location is the nucleus speckle. The protein localises to the nucleus. The protein resides in the nucleoplasm. It localises to the cytoplasm. In terms of biological role, involved in pre-mRNA splicing. Functions in association with cyclin-dependent kinases (CDKs). May play a role in the regulation of RNA polymerase II (pol II). Inhibited by the CDK-specific inhibitor CDKN1A/p21. This chain is Cyclin-L1 (Ccnl1), found in Mus musculus (Mouse).